A 465-amino-acid polypeptide reads, in one-letter code: Fumarate hydratase class II (465 aa).

Substrate is bound by residues 98–100 (SGT), Arg126, 129–132 (HPND), 139–141 (SSN), and Thr187. The Proton donor/acceptor role is filled by His188. The active site involves Ser318. Substrate-binding positions include Ser319 and 324–326 (KVN).

This sequence belongs to the class-II fumarase/aspartase family. Fumarase subfamily. In terms of assembly, homotetramer.

It is found in the cytoplasm. It catalyses the reaction (S)-malate = fumarate + H2O. It participates in carbohydrate metabolism; tricarboxylic acid cycle; (S)-malate from fumarate: step 1/1. Involved in the TCA cycle. Catalyzes the stereospecific interconversion of fumarate to L-malate. In Yersinia pestis, this protein is Fumarate hydratase class II.